Reading from the N-terminus, the 150-residue chain is Cytochrome c-type biogenesis protein CcmE (150 aa).

Topologically, residues 1–9 (MRNLKKTRR) are cytoplasmic. Residues 10 to 30 (IQILLVAGGALVLSTALIGYG) traverse the membrane as a helical; Signal-anchor for type II membrane protein segment. At 31–150 (MRDGINFFRA…VYRDPAQPEG (120 aa)) the chain is on the periplasmic side. Residues histidine 123 and tyrosine 127 each contribute to the heme site.

It belongs to the CcmE/CycJ family.

Its subcellular location is the cell inner membrane. Functionally, heme chaperone required for the biogenesis of c-type cytochromes. Transiently binds heme delivered by CcmC and transfers the heme to apo-cytochromes in a process facilitated by CcmF and CcmH. In Rhodobacter capsulatus (strain ATCC BAA-309 / NBRC 16581 / SB1003), this protein is Cytochrome c-type biogenesis protein CcmE.